The primary structure comprises 436 residues: Amino acid transporter AVT3C (436 aa).

The span at 1–13 shows a compositional bias: polar residues; the sequence is MGFQNEASSSSYT. The segment at 1-21 is disordered; sequence MGFQNEASSSSYTLKIPPPAR. Residues 1–38 are Cytoplasmic-facing; that stretch reads MGFQNEASSSSYTLKIPPPAREDSPLLGKGPPLSSQFK. The helical transmembrane segment at 39–59 threads the bilayer; that stretch reads TFANVFIAVVGAGVLGLPYAF. Over 60 to 65 the chain is Vacuolar; sequence KRTGWL. A helical transmembrane segment spans residues 66 to 86; it reads MGVLLLVSVSVLTHHCMMLLV. Residues 87 to 118 are Cytoplasmic-facing; the sequence is YTRRKLDSFNAGISKIGSFGDLGFAVCGSLGR. A helical membrane pass occupies residues 119-139; sequence IVVDLFIILSQAGFCVGYLIF. The Vacuolar portion of the chain corresponds to 140 to 166; that stretch reads IGTTLANLSDPESPTSLRHQFTRLGSE. A helical transmembrane segment spans residues 167–187; it reads FLGVSSKSLYIWGCFPFQLGL. Topologically, residues 188-195 are cytoplasmic; that stretch reads NSIKTLTH. The chain crosses the membrane as a helical span at residues 196–216; the sequence is LAPLSIFADIVDLGAMAVVIV. The Vacuolar portion of the chain corresponds to 217–228; that stretch reads EDSMIILKQRPD. The helical transmembrane segment at 229-249 threads the bilayer; the sequence is VVAFGGMSLFLYGMGVAVYSF. Residues 250–273 are Cytoplasmic-facing; it reads EGVGMVLPLESEMKDKDKFGKVLA. Residues 274 to 294 form a helical membrane-spanning segment; that stretch reads LGMGFISLIYIAFGILGYLAF. Over 295-309 the chain is Vacuolar; the sequence is GEDTMDIITANLGAG. The helical transmembrane segment at 310–330 threads the bilayer; the sequence is LVSTVVQLGLCINLFFTFPLM. Topologically, residues 331-352 are cytoplasmic; it reads MNPVFEIVERRFSRGMYSAWLR. The chain crosses the membrane as a helical span at residues 353–373; the sequence is WVLVLAVTLVALFVPNFADFL. The Vacuolar portion of the chain corresponds to 374–376; the sequence is SLV. A helical membrane pass occupies residues 377–397; it reads GSSTCCVLGFVLPALFHLLVF. Residues 398-411 lie on the Cytoplasmic side of the membrane; sequence KEEMGWLQWSSDTA. The helical transmembrane segment at 412–432 threads the bilayer; it reads IVVLGVVLAVSGTWSSLSEIF. Topologically, residues 433–436 are vacuolar; sequence SVKV.

The protein belongs to the amino acid/polyamine transporter 2 family. Amino acid/auxin permease (AAAP) (TC 2.A.18.8) subfamily. Ubiquitous.

It is found in the vacuole membrane. Its function is as follows. Translocates preferentially neutral amino acids from the vacuole to the cytoplasm. The polypeptide is Amino acid transporter AVT3C (Arabidopsis thaliana (Mouse-ear cress)).